We begin with the raw amino-acid sequence, 704 residues long: MKRLKLILRRTYLTSTGVNCSFEISRLSRIGKINEARKFFDSLQFKAIGSWNSIVSGYFSNGLPKEARQLFDEMSERNVVSWNGLVSGYIKNRMIVEARNVFELMPERNVVSWTAMVKGYMQEGMVGEAESLFWRMPERNEVSWTVMFGGLIDDGRIDKARKLYDMMPVKDVVASTNMIGGLCREGRVDEARLIFDEMRERNVVTWTTMITGYRQNNRVDVARKLFEVMPEKTEVSWTSMLLGYTLSGRIEDAEEFFEVMPMKPVIACNAMIVGFGEVGEISKARRVFDLMEDRDNATWRGMIKAYERKGFELEALDLFAQMQKQGVRPSFPSLISILSVCATLASLQYGRQVHAHLVRCQFDDDVYVASVLMTMYVKCGELVKAKLVFDRFSSKDIIMWNSIISGYASHGLGEEALKIFHEMPSSGTMPNKVTLIAILTACSYAGKLEEGLEIFESMESKFCVTPTVEHYSCTVDMLGRAGQVDKAMELIESMTIKPDATVWGALLGACKTHSRLDLAEVAAKKLFENEPDNAGTYVLLSSINASRSKWGDVAVVRKNMRTNNVSKFPGCSWIEVGKKVHMFTRGGIKNHPEQAMILMMLEKTDGLLREAGYSPDCSHVLHDVDEEEKVDSLSRHSERLAVAYGLLKLPEGVPIRVMKNLRVCGDCHAAIKLISKVTEREIILRDANRFHHFNNGECSCRDYW.

A mitochondrion-targeting transit peptide spans 1-12 (MKRLKLILRRTY). 15 PPR repeats span residues 16–46 (TGVN…LQFK), 47–81 (AIGS…NVVS), 82–108 (WNGL…MPER), 109–143 (NVVS…NEVS), 144–170 (WTVM…MPVK), 171–205 (DVVA…NVVT), 206–232 (WTTM…MPEK), 233–267 (TEVS…PVIA), 268–294 (CNAM…MEDR), 295–329 (DNAT…GVRP), 330–364 (SFPS…QFDD), 365–395 (DVYV…FSSK), 396–430 (DIIM…GTMP), 431–465 (NKVT…FCVT), and 467–497 (TVEH…MTIK). The interval 502–577 (VWGALLGACK…FPGCSWIEVG (76 aa)) is type E motif. A type E(+) motif region spans residues 578–609 (KKVHMFTRGGIKNHPEQAMILMMLEKTDGLLR). The type DYW motif stretch occupies residues 610–704 (EAGYSPDCSH…NGECSCRDYW (95 aa)).

This sequence belongs to the PPR family. PCMP-H subfamily.

Its subcellular location is the mitochondrion. The chain is Pentatricopeptide repeat-containing protein At1g56690, mitochondrial (PCMP-H69) from Arabidopsis thaliana (Mouse-ear cress).